Consider the following 155-residue polypeptide: Ribosomal RNA large subunit methyltransferase H (155 aa).

Residues Leu72, Gly103, and 122-127 (LSALTL) contribute to the S-adenosyl-L-methionine site.

This sequence belongs to the RNA methyltransferase RlmH family. In terms of assembly, homodimer.

It is found in the cytoplasm. The catalysed reaction is pseudouridine(1915) in 23S rRNA + S-adenosyl-L-methionine = N(3)-methylpseudouridine(1915) in 23S rRNA + S-adenosyl-L-homocysteine + H(+). Functionally, specifically methylates the pseudouridine at position 1915 (m3Psi1915) in 23S rRNA. The protein is Ribosomal RNA large subunit methyltransferase H of Escherichia fergusonii (strain ATCC 35469 / DSM 13698 / CCUG 18766 / IAM 14443 / JCM 21226 / LMG 7866 / NBRC 102419 / NCTC 12128 / CDC 0568-73).